We begin with the raw amino-acid sequence, 470 residues long: Transcription factor SOX-8 (470 aa).

Over residues 1 to 12 (MLNMTEEHDKAL) the composition is skewed to basic and acidic residues. The disordered stretch occupies residues 1 to 60 (MLNMTEEHDKALEAPCSPAGTTSSMSHVDSDSDSPLSPAGSEGLGCAPAPAPRPPGAAPL). Residues 67–107 (AEVDERFPACIRDAVSQVLKGYDWSLVPMPVRGNGSLKAKP) are dimerization (DIM). Positions 109 to 177 (VKRPMNAFMV…QHKKDHPDYK (69 aa)) form a DNA-binding region, HMG box. Composition is skewed to basic and acidic residues over residues 163-178 (ERLR…DYKY), 219-228 (DGHHHGEHAG), and 242-257 (TDLH…HEGR). 2 disordered regions span residues 163 to 257 (ERLR…HEGR) and 327 to 381 (AGGA…DYGS). Residues 233 to 308 (PPTPPTTPKT…LNGHTAMPAD (76 aa)) are transactivation domain (TAM). Residues 338–349 (SPASASPSSADS) show a composition bias toward low complexity. Residues 353–470 (RPHIKTEQLS…QPVYTTLTRP (118 aa)) form a transactivation domain (TAC) region. A compositionally biased stretch (polar residues) spans 359–372 (EQLSPSHYSDQSHG). Positions 424 to 432 (SSIYQYPYF) match the 9aaTAD motif.

As to expression, widely expressed in the embryo.

The protein resides in the nucleus. Transcription factor that may play a role in central nervous system, limb and facial development. May be involved in male sex determination. Binds the consensus motif 5'-[AT][AT]CAA[AT]G-3'. This is Transcription factor SOX-8 (SOX8) from Gallus gallus (Chicken).